Reading from the N-terminus, the 880-residue chain is Alanine--tRNA ligase (880 aa).

Positions 568, 572, 670, and 674 each coordinate Zn(2+).

This sequence belongs to the class-II aminoacyl-tRNA synthetase family. Zn(2+) is required as a cofactor.

Its subcellular location is the cytoplasm. The enzyme catalyses tRNA(Ala) + L-alanine + ATP = L-alanyl-tRNA(Ala) + AMP + diphosphate. Functionally, catalyzes the attachment of alanine to tRNA(Ala) in a two-step reaction: alanine is first activated by ATP to form Ala-AMP and then transferred to the acceptor end of tRNA(Ala). Also edits incorrectly charged Ser-tRNA(Ala) and Gly-tRNA(Ala) via its editing domain. The sequence is that of Alanine--tRNA ligase from Exiguobacterium sibiricum (strain DSM 17290 / CCUG 55495 / CIP 109462 / JCM 13490 / 255-15).